A 265-amino-acid polypeptide reads, in one-letter code: Tryptophan synthase alpha chain (265 aa).

Catalysis depends on proton acceptor residues Glu-48 and Asp-59.

The protein belongs to the TrpA family. In terms of assembly, tetramer of two alpha and two beta chains.

It carries out the reaction (1S,2R)-1-C-(indol-3-yl)glycerol 3-phosphate + L-serine = D-glyceraldehyde 3-phosphate + L-tryptophan + H2O. It functions in the pathway amino-acid biosynthesis; L-tryptophan biosynthesis; L-tryptophan from chorismate: step 5/5. Functionally, the alpha subunit is responsible for the aldol cleavage of indoleglycerol phosphate to indole and glyceraldehyde 3-phosphate. The protein is Tryptophan synthase alpha chain of Ruthia magnifica subsp. Calyptogena magnifica.